The sequence spans 468 residues: Sushi repeat-containing protein SRPX2 (468 aa).

Residues 1–25 (MMTSPLTQRGALSLLLLLMPAVTPT) form the signal peptide. Sushi domains lie at 72-122 (ATCY…YCRQ), 123-181 (IRCH…VCVD), and 265-324 (RRCP…VCTP). Intrachain disulfides connect Cys74-Cys108, Cys94-Cys120, Cys125-Cys166, and Cys152-Cys179. Residues 180-264 (VDIDPPKIRC…SCKFIVKVQV (85 aa)) form the HYR domain. 2 cysteine pairs are disulfide-bonded: Cys267–Cys309 and Cys295–Cys322.

In terms of assembly, forms homooligomers. Interacts with PLAUR (via the UPAR/Ly6 domains), ADAMTS4 and CTSB. Interacts with HGF; the interaction increases the mitogenic activity of HGF. Contains chondroitin sulfate chains. In terms of tissue distribution, expressed in angiogenic endothelial cells (at protein level).

The protein localises to the secreted. Its subcellular location is the cytoplasm. It localises to the cell surface. It is found in the synapse. Its function is as follows. Acts as a ligand for the urokinase plasminogen activator surface receptor. Plays a role in angiogenesis by inducing endothelial cell migration and the formation of vascular network (cords). Involved in cellular migration and adhesion. Increases the phosphorylation levels of FAK. Interacts with and increases the mitogenic activity of HGF. Promotes synapse formation. Required for ultrasonic vocalizations. This chain is Sushi repeat-containing protein SRPX2 (Srpx2), found in Mus musculus (Mouse).